The sequence spans 449 residues: NADH-quinone oxidoreductase subunit H (449 aa).

The next 9 helical transmembrane spans lie at 26–46 (FWLI…MTLF), 96–116 (PIFI…FAVI), 136–156 (LPVS…GLIL), 177–197 (IISY…YAGT), 211–231 (WYIA…GETN), 259–279 (FFFL…TTLF), 298–318 (WVPL…FIWL), 330–350 (FMAF…LVIA), and 365–385 (WLIG…LDPG). The interval 396 to 449 (AERRKLAEAPSLESIPWPPPPPGGAHHRPAVPAGTSANGSSTVIPADPPPRQES) is disordered.

Belongs to the complex I subunit 1 family. As to quaternary structure, NDH-1 is composed of 14 different subunits. Subunits NuoA, H, J, K, L, M, N constitute the membrane sector of the complex.

It is found in the cell membrane. The enzyme catalyses a quinone + NADH + 5 H(+)(in) = a quinol + NAD(+) + 4 H(+)(out). NDH-1 shuttles electrons from NADH, via FMN and iron-sulfur (Fe-S) centers, to quinones in the respiratory chain. The immediate electron acceptor for the enzyme in this species is believed to be ubiquinone. Couples the redox reaction to proton translocation (for every two electrons transferred, four hydrogen ions are translocated across the cytoplasmic membrane), and thus conserves the redox energy in a proton gradient. This subunit may bind ubiquinone. This is NADH-quinone oxidoreductase subunit H from Frankia alni (strain DSM 45986 / CECT 9034 / ACN14a).